The sequence spans 156 residues: Arginine repressor (156 aa).

It belongs to the ArgR family.

The protein localises to the cytoplasm. It functions in the pathway amino-acid biosynthesis; L-arginine biosynthesis [regulation]. Its function is as follows. Regulates arginine biosynthesis genes. The sequence is that of Arginine repressor from Shewanella woodyi (strain ATCC 51908 / MS32).